A 202-amino-acid chain; its full sequence is HTH-type transcriptional regulator BetI 1 (202 aa).

The HTH tetR-type domain occupies 8 to 68 (PIRRRQLIQA…SAMRQILWDL (61 aa)). The H-T-H motif DNA-binding region spans 31 to 50 (TIARIAKRAGVSAGIISHYF).

Its pathway is amine and polyamine biosynthesis; betaine biosynthesis via choline pathway [regulation]. Repressor involved in the biosynthesis of the osmoprotectant glycine betaine. It represses transcription of the choline transporter BetT and the genes of BetAB involved in the synthesis of glycine betaine. The protein is HTH-type transcriptional regulator BetI 1 of Chromohalobacter salexigens (strain ATCC BAA-138 / DSM 3043 / CIP 106854 / NCIMB 13768 / 1H11).